The following is a 139-amino-acid chain: Endoribonuclease YbeY (139 aa).

Positions 107, 111, and 117 each coordinate Zn(2+).

This sequence belongs to the endoribonuclease YbeY family. The cofactor is Zn(2+).

Its subcellular location is the cytoplasm. Its function is as follows. Single strand-specific metallo-endoribonuclease involved in late-stage 70S ribosome quality control and in maturation of the 3' terminus of the 16S rRNA. This is Endoribonuclease YbeY from Azobacteroides pseudotrichonymphae genomovar. CFP2.